The primary structure comprises 491 residues: Glutamyl-tRNA(Gln) amidotransferase subunit A (491 aa).

Catalysis depends on charge relay system residues Lys78 and Ser158. Residue Ser182 is the Acyl-ester intermediate of the active site.

This sequence belongs to the amidase family. GatA subfamily. In terms of assembly, heterotrimer of A, B and C subunits.

It catalyses the reaction L-glutamyl-tRNA(Gln) + L-glutamine + ATP + H2O = L-glutaminyl-tRNA(Gln) + L-glutamate + ADP + phosphate + H(+). Its function is as follows. Allows the formation of correctly charged Gln-tRNA(Gln) through the transamidation of misacylated Glu-tRNA(Gln) in organisms which lack glutaminyl-tRNA synthetase. The reaction takes place in the presence of glutamine and ATP through an activated gamma-phospho-Glu-tRNA(Gln). The protein is Glutamyl-tRNA(Gln) amidotransferase subunit A of Bradyrhizobium sp. (strain ORS 278).